A 617-amino-acid chain; its full sequence is Serine/threonine-protein phosphatase 2A activator 1 (617 aa).

A compositionally biased stretch (pro residues) spans 1–11 (MDPTSKRPPPA). 5 disordered regions span residues 1–25 (MDPT…PKLE), 84–169 (VSTS…ESES), 230–261 (GAGG…TNEQ), 376–398 (SSPN…SDIT), and 572–617 (RFTP…PWTK). Positions 84 to 93 (VSTSEPTTDG) are enriched in polar residues. The span at 94–104 (QQQQQQQQQRQ) shows a compositional bias: low complexity. A compositionally biased stretch (acidic residues) spans 239-252 (EEGTETETETETEG).

This sequence belongs to the PTPA-type PPIase family.

The protein localises to the cytoplasm. The protein resides in the nucleus. It carries out the reaction [protein]-peptidylproline (omega=180) = [protein]-peptidylproline (omega=0). Its function is as follows. PPIases accelerate the folding of proteins. It catalyzes the cis-trans isomerization of proline imidic peptide bonds in oligopeptides. Acts as a regulatory subunit for PP2A-like phosphatases modulating their activity or substrate specificity, probably by inducing a conformational change in the catalytic subunit, a direct target of the PPIase. Can reactivate inactive phosphatase PP2A-phosphatase methylesterase complexes (PP2Ai) in presence of ATP and Mg(2+) by dissociating the inactive form from the complex. The polypeptide is Serine/threonine-protein phosphatase 2A activator 1 (rrd-1) (Neurospora crassa (strain ATCC 24698 / 74-OR23-1A / CBS 708.71 / DSM 1257 / FGSC 987)).